Reading from the N-terminus, the 304-residue chain is FTTQETITNANTAKQWFLKSAKDSKFVANHFVALSTNAKLVQEFGIDKANMFEFWDWVGGRYSLWSAIGMSIALNIGFENFEHLLSGAHWMDNHFKSTPIERNIPVILAVLGIWYGNFYGAETQALLPYDQYMHRFAAYFQQGDMESNGKYVVRAGDKVNYSTGPIVWGEPGTNGQHAFYQLIHQVPHHPCDFNSPVKSHNSELRDGLHHTILLSNFLAQTEALMKGKDRQTVEKELKAAGKSEDEIKSIGPHKEFTGNRPTNSIMVDTVTPFTLGAMIAMYEHKIFTQGIIWDINSYDQWGVE.

Glutamate 146 acts as the Proton donor in catalysis. The active site involves histidine 177.

This sequence belongs to the GPI family.

The protein resides in the cytoplasm. The catalysed reaction is alpha-D-glucose 6-phosphate = beta-D-fructose 6-phosphate. It functions in the pathway carbohydrate degradation; glycolysis; D-glyceraldehyde 3-phosphate and glycerone phosphate from D-glucose: step 2/4. The chain is Glucose-6-phosphate isomerase (PGI) from Calanus finmarchicus (Calanus tonsus).